The chain runs to 1208 residues: E3 ubiquitin-protein ligase DZIP3 (1208 aa).

Positions V10–K29 are enriched in basic and acidic residues. Disordered stretches follow at residues V10 to E38 and G637 to V698. 4 coiled-coil regions span residues A14 to T43, E647 to D676, I792 to N853, and Q904 to Q939. Positions G637–E647 are enriched in polar residues. Positions S648–S657 are enriched in basic and acidic residues. The span at K658–K669 shows a compositional bias: basic residues. Basic and acidic residues predominate over residues N670–A693. The segment at K1088–E1145 is disordered. Polar residues predominate over residues S1089 to D1112. Residues C1148–R1188 form an RING-type; atypical zinc finger.

As to quaternary structure, interacts with DAZ proteins. Widely expressed at low level. Highly expressed in skeletal muscle, kidney and heart. Expressed at low level in placenta, lung, brain, liver and pancreas.

It localises to the cytoplasm. It carries out the reaction S-ubiquitinyl-[E2 ubiquitin-conjugating enzyme]-L-cysteine + [acceptor protein]-L-lysine = [E2 ubiquitin-conjugating enzyme]-L-cysteine + N(6)-ubiquitinyl-[acceptor protein]-L-lysine.. It functions in the pathway protein modification; protein ubiquitination. In terms of biological role, E3 Ubiquitin ligase proteins mediate ubiquitination and subsequent proteasomal degradation of target proteins. E3 ubiquitin ligases accept ubiquitin from an E2 ubiquitin-conjugating enzyme in the form of a thioester and then directly transfers the ubiquitin to targeted substrates. Able to specifically bind RNA. The protein is E3 ubiquitin-protein ligase DZIP3 (DZIP3) of Homo sapiens (Human).